The following is a 316-amino-acid chain: Aspartate-semialdehyde dehydrogenase (316 aa).

NADP(+) is bound by residues 13–16 and 41–42; these read TGAV and RS. Arginine 101 lines the phosphate pocket. The active-site Acyl-thioester intermediate is the cysteine 132. Glutamine 159 contacts substrate. 162-163 contacts NADP(+); sequence SG. A phosphate-binding site is contributed by lysine 216. Arginine 238 lines the substrate pocket. The active-site Proton acceptor is the histidine 245. An NADP(+)-binding site is contributed by asparagine 316.

This sequence belongs to the aspartate-semialdehyde dehydrogenase family. Homodimer.

It catalyses the reaction L-aspartate 4-semialdehyde + phosphate + NADP(+) = 4-phospho-L-aspartate + NADPH + H(+). The protein operates within amino-acid biosynthesis; L-lysine biosynthesis via DAP pathway; (S)-tetrahydrodipicolinate from L-aspartate: step 2/4. Its pathway is amino-acid biosynthesis; L-methionine biosynthesis via de novo pathway; L-homoserine from L-aspartate: step 2/3. It functions in the pathway amino-acid biosynthesis; L-threonine biosynthesis; L-threonine from L-aspartate: step 2/5. Catalyzes the NADPH-dependent formation of L-aspartate-semialdehyde (L-ASA) by the reductive dephosphorylation of L-aspartyl-4-phosphate. The polypeptide is Aspartate-semialdehyde dehydrogenase (asd) (Vibrio mimicus).